A 256-amino-acid polypeptide reads, in one-letter code: Protein FixA (256 aa).

The protein belongs to the ETF beta-subunit/FixA family. Heterodimer of FixA and FixB.

The protein operates within amine and polyamine metabolism; carnitine metabolism. Required for anaerobic carnitine reduction. May bring reductant to CaiA. In Escherichia coli O7:K1 (strain IAI39 / ExPEC), this protein is Protein FixA.